The following is a 680-amino-acid chain: DNA-directed RNA polymerase subunit beta' (680 aa).

Cysteine 69, cysteine 71, cysteine 87, and cysteine 90 together coordinate Zn(2+). Positions 489, 491, and 493 each coordinate Mg(2+).

The protein belongs to the RNA polymerase beta' chain family. RpoC1 subfamily. In terms of assembly, in plastids the minimal PEP RNA polymerase catalytic core is composed of four subunits: alpha, beta, beta', and beta''. When a (nuclear-encoded) sigma factor is associated with the core the holoenzyme is formed, which can initiate transcription. Mg(2+) is required as a cofactor. Zn(2+) serves as cofactor.

The protein localises to the plastid. The protein resides in the chloroplast. It catalyses the reaction RNA(n) + a ribonucleoside 5'-triphosphate = RNA(n+1) + diphosphate. In terms of biological role, DNA-dependent RNA polymerase catalyzes the transcription of DNA into RNA using the four ribonucleoside triphosphates as substrates. The protein is DNA-directed RNA polymerase subunit beta' of Cucumis sativus (Cucumber).